A 439-amino-acid polypeptide reads, in one-letter code: Ectonucleotide pyrophosphatase/phosphodiesterase family member 7 (439 aa).

The signal sequence occupies residues 1-21; it reads MGHSAVLLCVALAILPACVTG. Over 22–414 the chain is Extracellular; sequence APVQRQHKLL…ILRPMLRSGS (393 aa). D36 and T72 together coordinate Zn(2+). The segment at 69–75 is required for enzyme activity; it reads VTMTSPC. Catalysis depends on T72, which acts as the Nucleophile. N93 lines the substrate pocket. N-linked (GlcNAc...) asparagine glycans are attached at residues N97, N118, N143, and N165. Zn(2+) is bound by residues D196, H200, D243, and H244. Residue N264 is glycosylated (N-linked (GlcNAc...) asparagine). H350 provides a ligand contact to Zn(2+). A helical membrane pass occupies residues 415 to 435; that stretch reads ASLLSSQHHLVALLVGILTCL. Topologically, residues 436–439 are cytoplasmic; sequence AKVL.

It depends on Zn(2+) as a cofactor. In terms of processing, N-glycosylated; required for activity and transport to the plasma membrane. In terms of tissue distribution, expressed in liver and small intestine.

It localises to the cell membrane. The catalysed reaction is a sphingomyelin + H2O = phosphocholine + an N-acylsphing-4-enine + H(+). It catalyses the reaction a 1-O-alkyl-2-acetyl-sn-glycero-3-phosphocholine + H2O = a 1-O-alkyl-2-acetyl-sn-glycerol + phosphocholine + H(+). It carries out the reaction 1-O-octadecyl-2-acetyl-sn-glycero-3-phosphocholine + H2O = 1-O-octadecyl-2-acetyl-sn-glycerol + phosphocholine + H(+). The enzyme catalyses 1-hexadecanoyl-sn-glycero-3-phosphocholine + H2O = 1-hexadecanoyl-sn-glycerol + phosphocholine + H(+). Functionally, choline-specific phosphodiesterase that hydrolyzes sphingomyelin releasing the ceramide and phosphocholine and therefore is involved in sphingomyelin digestion, ceramide formation, and fatty acid (FA) absorption in the gastrointestinal tract. Also has phospholipase C activity and can also cleave phosphocholine from palmitoyl lyso-phosphatidylcholine and platelet-activating factor (PAF) leading to its inactivation. Does not have nucleotide pyrophosphatase activity. May promote cholesterol absorption by affecting the levels of sphingomyelin derived from either diet or endogenous sources, in the intestinal lumen. The chain is Ectonucleotide pyrophosphatase/phosphodiesterase family member 7 from Mus musculus (Mouse).